A 404-amino-acid chain; its full sequence is E3 ubiquitin-protein ligase RNF128 (404 aa).

The first 31 residues, 1-31 (MGALKMRCQCFPLPYLSLLALLLLNLSLTRA), serve as a signal peptide directing secretion. Residues 62–166 (DSPIERAAGL…LKGNEIVDLI (105 aa)) enclose the PA domain. A helical transmembrane segment spans residues 191-211 (IFFVSVSFFIVTAATVGYFIF). Residues 260 to 301 (CAVCIEPYKPSDVVRILTCNHFFHKNCIDPWLLEHRTCPMCK) form an RING-type; atypical zinc finger. The interval 336-356 (ITEEENHSETASSGYASVRGG) is disordered.

Auto-ubiquitinated. As to expression, expressed in the cement gland, cranial placodes, and the pronephros.

It is found in the endomembrane system. Its subcellular location is the cytoplasm. The protein resides in the perinuclear region. It carries out the reaction S-ubiquitinyl-[E2 ubiquitin-conjugating enzyme]-L-cysteine + [acceptor protein]-L-lysine = [E2 ubiquitin-conjugating enzyme]-L-cysteine + N(6)-ubiquitinyl-[acceptor protein]-L-lysine.. It functions in the pathway protein modification; protein ubiquitination. Its function is as follows. E3 ubiquitin-protein ligase that catalyzes polyubiquitin chains. Converts epidermis into cement gland and neural tissue in whole embryos. The protein is E3 ubiquitin-protein ligase RNF128 (rnf128) of Xenopus laevis (African clawed frog).